The chain runs to 91 residues: MNKSELIQAIADEAELSKRAAAEFVNAFVSVVTQELKDGNDVTLVGFGTFHAAQSAERQGRNPKTGEPLTIAARKTPKFRSGKALKDAVNG.

It belongs to the bacterial histone-like protein family.

Histone-like DNA-binding protein which is capable of wrapping DNA to stabilize it, and thus to prevent its denaturation under extreme environmental conditions. The sequence is that of DNA-binding protein HU-beta 2 (hupB2) from Neisseria meningitidis serogroup A / serotype 4A (strain DSM 15465 / Z2491).